A 68-amino-acid polypeptide reads, in one-letter code: Lipopolysaccharide export system ATP-binding protein LptB (68 aa).

It belongs to the ABC transporter superfamily. Outer membrane lipopolysaccharide export (TC 1.B.42) family. In terms of assembly, component of the lipopolysaccharide transport and assembly complex. The LptBFG transporter is composed of two ATP-binding proteins (LptB) and two transmembrane proteins (LptF and LptG).

The protein localises to the cytoplasm. Its subcellular location is the cell inner membrane. In terms of biological role, part of the ABC transporter complex LptBFG involved in the translocation of lipopolysaccharide (LPS) from the inner membrane to the outer membrane. Probably responsible for energy coupling to the transport system. In Klebsiella oxytoca, this protein is Lipopolysaccharide export system ATP-binding protein LptB (lptB).